The primary structure comprises 367 residues: 4-hydroxy-3-methylbut-2-en-1-yl diphosphate synthase (flavodoxin) (367 aa).

The [4Fe-4S] cluster site is built by Cys-265, Cys-268, Cys-300, and Glu-307.

Belongs to the IspG family. [4Fe-4S] cluster is required as a cofactor.

The catalysed reaction is (2E)-4-hydroxy-3-methylbut-2-enyl diphosphate + oxidized [flavodoxin] + H2O + 2 H(+) = 2-C-methyl-D-erythritol 2,4-cyclic diphosphate + reduced [flavodoxin]. It participates in isoprenoid biosynthesis; isopentenyl diphosphate biosynthesis via DXP pathway; isopentenyl diphosphate from 1-deoxy-D-xylulose 5-phosphate: step 5/6. Its function is as follows. Converts 2C-methyl-D-erythritol 2,4-cyclodiphosphate (ME-2,4cPP) into 1-hydroxy-2-methyl-2-(E)-butenyl 4-diphosphate. This chain is 4-hydroxy-3-methylbut-2-en-1-yl diphosphate synthase (flavodoxin), found in Bacillus cereus (strain ATCC 10987 / NRS 248).